The chain runs to 207 residues: MDQSLANGVGGASIERNTTETRIRVAVNLDGTGVYDVKTGVGFLDHMLEQLSRHSLMDLSVAAEGDVHIDAHHTTEHSGIAIGQAVAKAVGDRKGIQRYGHAYVPMDETLTRVALDFSNRPYLIWKVSFSRDKIGDMDTELFREWFQAFAMAAGVTLHVECLYGENNHHIVESCYKALARALRAGIEIDPRKRDAVPSTKGTLGGSL.

This sequence belongs to the imidazoleglycerol-phosphate dehydratase family.

The protein localises to the cytoplasm. The enzyme catalyses D-erythro-1-(imidazol-4-yl)glycerol 3-phosphate = 3-(imidazol-4-yl)-2-oxopropyl phosphate + H2O. Its pathway is amino-acid biosynthesis; L-histidine biosynthesis; L-histidine from 5-phospho-alpha-D-ribose 1-diphosphate: step 6/9. This is Imidazoleglycerol-phosphate dehydratase (hisB) from Azospirillum brasilense.